We begin with the raw amino-acid sequence, 429 residues long: GTPase Obg (429 aa).

The 158-residue stretch at 1–158 (MFVDQVKIYV…RNVQLELKVL (158 aa)) folds into the Obg domain. The disordered stretch occupies residues 124-145 (RGNKRFATPANPAPELSENGEP). Residues 159 to 329 (ADVGLVGFPS…LLLAIADKLE (171 aa)) enclose the OBG-type G domain. GTP is bound by residues 165–172 (GFPSVGKS), 190–194 (FTTIV), 212–215 (DLPG), 282–285 (NKMD), and 310–312 (SAV). 2 residues coordinate Mg(2+): Ser172 and Thr192. In terms of domain architecture, OCT spans 351 to 429 (KYVAEEPDFE…LLDYEFEFMD (79 aa)).

The protein belongs to the TRAFAC class OBG-HflX-like GTPase superfamily. OBG GTPase family. Monomer. It depends on Mg(2+) as a cofactor.

Its subcellular location is the cytoplasm. Its function is as follows. An essential GTPase which binds GTP, GDP and possibly (p)ppGpp with moderate affinity, with high nucleotide exchange rates and a fairly low GTP hydrolysis rate. Plays a role in control of the cell cycle, stress response, ribosome biogenesis and in those bacteria that undergo differentiation, in morphogenesis control. This is GTPase Obg from Listeria innocua serovar 6a (strain ATCC BAA-680 / CLIP 11262).